A 147-amino-acid polypeptide reads, in one-letter code: Myoglobin (147 aa).

Positions 2 to 141 constitute a Globin domain; the sequence is ADFDAVLKCW…VIADLEANYK (140 aa). Residue His-60 coordinates nitrite. Position 60 (His-60) interacts with O2. His-89 contributes to the heme b binding site.

This sequence belongs to the globin family. In terms of assembly, monomeric.

It is found in the cytoplasm. Its subcellular location is the sarcoplasm. The catalysed reaction is Fe(III)-heme b-[protein] + nitric oxide + H2O = Fe(II)-heme b-[protein] + nitrite + 2 H(+). It catalyses the reaction H2O2 + AH2 = A + 2 H2O. In terms of biological role, monomeric heme protein which primary function is to store oxygen and facilitate its diffusion within muscle tissues. Reversibly binds oxygen through a pentacoordinated heme iron and enables its timely and efficient release as needed during periods of heightened demand. Depending on the oxidative conditions of tissues and cells, and in addition to its ability to bind oxygen, it also has a nitrite reductase activity whereby it regulates the production of bioactive nitric oxide. Under stress conditions, like hypoxia and anoxia, it also protects cells against reactive oxygen species thanks to its pseudoperoxidase activity. This chain is Myoglobin (mb), found in Auxis rochei (Bullet tuna).